Consider the following 343-residue polypeptide: Aspartate carbamoyltransferase catalytic subunit (343 aa).

Residues 1 to 14 are compositionally biased toward polar residues; it reads MTTDTTGRTGNPAA. Positions 1–20 are disordered; it reads MTTDTTGRTGNPAATASPDR. Carbamoyl phosphate is bound by residues Arg91 and Thr92. Lys119 contacts L-aspartate. 3 residues coordinate carbamoyl phosphate: Arg141, His171, and Gln174. L-aspartate is bound by residues Arg204 and Arg259. Carbamoyl phosphate-binding residues include Gly300 and Pro301.

It belongs to the aspartate/ornithine carbamoyltransferase superfamily. ATCase family. As to quaternary structure, heterododecamer (2C3:3R2) of six catalytic PyrB chains organized as two trimers (C3), and six regulatory PyrI chains organized as three dimers (R2).

It catalyses the reaction carbamoyl phosphate + L-aspartate = N-carbamoyl-L-aspartate + phosphate + H(+). Its pathway is pyrimidine metabolism; UMP biosynthesis via de novo pathway; (S)-dihydroorotate from bicarbonate: step 2/3. Functionally, catalyzes the condensation of carbamoyl phosphate and aspartate to form carbamoyl aspartate and inorganic phosphate, the committed step in the de novo pyrimidine nucleotide biosynthesis pathway. This is Aspartate carbamoyltransferase catalytic subunit from Burkholderia lata (strain ATCC 17760 / DSM 23089 / LMG 22485 / NCIMB 9086 / R18194 / 383).